A 419-amino-acid chain; its full sequence is Probable serine/threonine-protein kinase CST (419 aa).

Residue G2 is the site of N-myristoyl glycine attachment. C4 is lipidated: S-palmitoyl cysteine. Residues 8–48 (FSSSSPSKTGLHSHATTNNHSNGTEFSSTTGATTNSSVGQQ) form a disordered region. The segment covering 15 to 48 (KTGLHSHATTNNHSNGTEFSSTTGATTNSSVGQQ) has biased composition (polar residues). The Protein kinase domain occupies 86 to 368 (FKPDSMLGQG…KEVVEVLEHI (283 aa)). 92–100 (LGQGGFGKV) contributes to the ATP binding site. A Phosphoserine modification is found at S117. ATP is bound at residue K124. Residue Y169 is modified to Phosphotyrosine. D218 (proton acceptor) is an active-site residue. S222 bears the Phosphoserine mark. A phosphothreonine mark is found at T253 and T258. Phosphotyrosine is present on Y266. Over residues 378 to 390 (SSTKQAVANSSRS) the composition is skewed to polar residues. A disordered region spans residues 378 to 419 (SSTKQAVANSSRSSPHHYRYKAGALGAERKRATPGRFGSVEK).

Belongs to the protein kinase superfamily. Ser/Thr protein kinase family. Interacts with SOBIR1/EVR and RLK5/HAE. Autophosphorylated on serine, threonine and tyrosine residues.

The protein resides in the cell membrane. It is found in the nucleus. The catalysed reaction is L-seryl-[protein] + ATP = O-phospho-L-seryl-[protein] + ADP + H(+). The enzyme catalyses L-threonyl-[protein] + ATP = O-phospho-L-threonyl-[protein] + ADP + H(+). Functionally, acts as a spatial inhibitor of signaling that modulates abscission zone cell adhesion and expansion. Acts both directly and indirectly by physically interacting with RLK5/HAE and SOBIR1/EVR at the cell surface. This chain is Probable serine/threonine-protein kinase CST, found in Arabidopsis thaliana (Mouse-ear cress).